The sequence spans 950 residues: Protocadherin alpha-6 (950 aa).

The N-terminal stretch at 1–29 (MVFTPEDRLGKQCLLLPLLLLAAWKVGSG) is a signal peptide. Residues 30–697 (QLHYSVPEEA…GPEAALVDVN (668 aa)) lie on the Extracellular side of the membrane. 6 consecutive Cadherin domains span residues 34–133 (SVPE…PPLF), 157–242 (ASDA…APTF), 243–350 (EQSE…VPEI), 351–455 (ALTS…APAF), 456–565 (AQPE…APAL), and 581–678 (VPRS…APKA). Residues Asn-257, Asn-265, Asn-386, and Asn-548 are each glycosylated (N-linked (GlcNAc...) asparagine). The helical transmembrane segment at 698 to 718 (VYLIIAICAVSSLLVLTLLLY) threads the bilayer. The Cytoplasmic segment spans residues 719–950 (TALRCSAPPT…GNSTTDNSDQ (232 aa)). 4 PXXP repeats span residues 799-802 (PRQP), 832-835 (PGGP), 873-876 (PGNP), and 891-894 (PGSP). Residues 799–894 (PRQPNPDWRY…PDKFIIPGSP (96 aa)) form a 4 X 4 AA repeats of P-X-X-P region. The segment at 830-950 (AGPGGPDQQW…GNSTTDNSDQ (121 aa)) is disordered. The span at 909-923 (DKSDFITFGKKEETK) shows a compositional bias: basic and acidic residues.

The protein localises to the cell membrane. The protein resides in the secreted. Potential calcium-dependent cell-adhesion protein. May be involved in the establishment and maintenance of specific neuronal connections in the brain. In Homo sapiens (Human), this protein is Protocadherin alpha-6 (PCDHA6).